Reading from the N-terminus, the 456-residue chain is Argininosuccinate lyase (456 aa).

The protein belongs to the lyase 1 family. Argininosuccinate lyase subfamily.

Its subcellular location is the cytoplasm. It catalyses the reaction 2-(N(omega)-L-arginino)succinate = fumarate + L-arginine. It functions in the pathway amino-acid biosynthesis; L-arginine biosynthesis; L-arginine from L-ornithine and carbamoyl phosphate: step 3/3. The protein is Argininosuccinate lyase of Listeria monocytogenes serovar 1/2a (strain ATCC BAA-679 / EGD-e).